Here is a 336-residue protein sequence, read N- to C-terminus: MAVKVAINGFGRIGRLAFRRIQEVEGLEVVAVNDLTDDDMLAHLLKYDTMQGRFTGEVEVVDGGFRVNGKEVKSFSEPDASKLPWKDLNIDVVLECTGFYTDKDKAQAHIEAGAKKVLISAPATGDLKTIVFNTNHQELDGSETVVSGASCTTNSLAPVAKVLNDDFGLVEGLMTTIHAYTGDQNTQDAPHRKGDKRRARAAAENIIPNSTGAAKAIGKVIPEIDGKLDGGAQRVPVATGSLTELTVVLEKQDVTVEQVNEAMKNASNESFGYTEDEIVSSDVVGMTYGSLFDATQTRVMSVGDRQLVKVAAWYDNEMSYTAQLVRTLAYLAELSK.

NAD(+) contacts are provided by residues 12–13 (RI), D34, and S120. D-glyceraldehyde 3-phosphate-binding positions include 150-152 (SCT), T181, R198, 211-212 (TG), and R234. C151 (nucleophile) is an active-site residue. N316 contributes to the NAD(+) binding site.

This sequence belongs to the glyceraldehyde-3-phosphate dehydrogenase family. As to quaternary structure, homotetramer.

It localises to the cytoplasm. It carries out the reaction D-glyceraldehyde 3-phosphate + phosphate + NAD(+) = (2R)-3-phospho-glyceroyl phosphate + NADH + H(+). The protein operates within carbohydrate degradation; glycolysis; pyruvate from D-glyceraldehyde 3-phosphate: step 1/5. Catalyzes the oxidative phosphorylation of glyceraldehyde 3-phosphate (G3P) to 1,3-bisphosphoglycerate (BPG) using the cofactor NAD. The first reaction step involves the formation of a hemiacetal intermediate between G3P and a cysteine residue, and this hemiacetal intermediate is then oxidized to a thioester, with concomitant reduction of NAD to NADH. The reduced NADH is then exchanged with the second NAD, and the thioester is attacked by a nucleophilic inorganic phosphate to produce BPG. The polypeptide is Glyceraldehyde-3-phosphate dehydrogenase (gapA) (Staphylococcus aureus).